The sequence spans 35 residues: Potassium channel toxin alpha-KTx 6.1 (35 aa).

Disulfide bonds link C4-C25, C10-C30, C14-C32, and C20-C35.

It belongs to the short scorpion toxin superfamily. Potassium channel inhibitor family. Alpha-KTx 06 subfamily. In terms of tissue distribution, expressed by the venom gland.

The protein localises to the secreted. Its function is as follows. Potently and reversibly inhibits the insect voltage-gated Shaker (Sh) potassium channel (isoform alpha (B)), the mammalian voltage-gated potassium channels Kv1.2/KCNA2 (IC(50)=0.44 nM), and the calcium-activated potassium channel KCa2.3/KCNN3 (Kd=330 nM). Its effect on Kv1.3/KCNA3 is controversial, since this channel is voltage-independently inhibited in PubMed:9464266, but is not affected in PubMed:10931199. Furthermore, this toxin competes with apamin (a small conductance calcium-activated potassium channel inhibitor) for binding to rat brain synaptosomes. The protein is Potassium channel toxin alpha-KTx 6.1 of Pandinus imperator (Emperor scorpion).